The sequence spans 107 residues: UPF0145 protein BH1111 (107 aa).

This sequence belongs to the UPF0145 family.

This Halalkalibacterium halodurans (strain ATCC BAA-125 / DSM 18197 / FERM 7344 / JCM 9153 / C-125) (Bacillus halodurans) protein is UPF0145 protein BH1111.